The following is a 977-amino-acid chain: SLIT and NTRK-like protein 3 (977 aa).

Positions 1–26 (MKPSIAEMLHRGRMLWIILLSTIALG) are cleaved as a signal peptide. Topologically, residues 29-654 (TPIPLIEDSE…SPPGGPVPLS (626 aa)) are extracellular. N68 is a glycosylation site (N-linked (GlcNAc...) asparagine). LRR repeat units follow at residues 78–99 (RPFK…SFLH), 102–123 (NAVS…AFNG), 126–147 (ILKR…TFLG), 150–171 (SLEY…AFRN), 174–195 (KLRV…LFKA), and 197–218 (SLTH…GMLD). The region spanning 232–283 (NPWNCTCEIVQLKSWLERIPYTALVGDITCETPFHFHGKDLREIRKTELCPL) is the LRRCT 1 domain. The disordered stretch occupies residues 325-360 (EYKSSNKQPKPTKQPRTPRPPSTSQALYPGPNQPPI). The 43-residue stretch at 364–406 (QTRPPIPIICPTGCTCNLHINDLGLTVNCKERGFNNISELLPR) folds into the LRRNT domain. 6 LRR repeats span residues 409 to 430 (NAKK…DFWN), 433 to 454 (SLDL…AFIN), 457 to 478 (NLKS…MFRG), 481 to 502 (SLHY…AFSL), 505 to 526 (NLKL…AFAG), and 528 to 549 (SLAR…GVLE). An LRRCT 2 domain is found at 562–613 (NPWDCTCDLVPFKQWIETISSVSVVGDVLCRSPENLTHRDVRTIELEVLCPE). N596 carries an N-linked (GlcNAc...) asparagine glycan. A helical membrane pass occupies residues 655 to 675 (VLILSLLVLFFSAVFVAAGLF). Topologically, residues 676–977 (AYVLRRRRKK…EVLEKTTYRF (302 aa)) are cytoplasmic. 2 disordered regions span residues 708 to 735 (LFED…KAPP) and 761 to 790 (EEEV…MGEA). The segment covering 711-724 (DGGGGGGGSGGGGR) has biased composition (gly residues). The segment covering 765–775 (AVSSAQEAGSA) has biased composition (low complexity).

Belongs to the SLITRK family. In terms of tissue distribution, expressed in the occipital lobe of the cerebral cortex of the brain. Expressed at higher levels in some astrocytic brain tumors such as astrocytomas, oligodendrogliomas, glioblastomas, gangliogliomas and primitive neuroectodermal tumors.

The protein resides in the membrane. In terms of biological role, suppresses neurite outgrowth. This is SLIT and NTRK-like protein 3 (SLITRK3) from Homo sapiens (Human).